A 503-amino-acid chain; its full sequence is MGTGAGGPSVLALLFAVCAPLRLQAEELGDGCGHIVTSQDSGTMTSKNYPGTYPNYTVCEKIITVPKGKRLILRLGDLNIESKTCASDYLLFSSATDQYGPYCGSWAVPKELRLNSNEVTVLFKSGSHISGRGFLLTYASSDHPDLITCLERGSHYFEEKYSKFCPAGCRDIAGDISGNTKDGYRDTSLLCKAAIHAGIITDELGGHINLLQSKGISHYEGLLANGVLSRHGSLSEKRFLFTTPGMNITTVAIPSVIFIALLLTGMGIFAICRKRKKKGNPYVSADAQKTGCWKQIKYPFARHQSTEFTISYDNEKEMTQKLDLITSDMADYQQPLMIGTGTVARKGSTFRPMDTDTEEVRVNTEASGHYDCPHRPGRHEYALPLTHSEPEYATPIVERHLLRAHTFSTQSGYRVPGPRPTHKHSHSSGGFPPATGATQVESYQRPASPKPVGGGYDKPAASSFLDSRDPASQSQMTSGGDDGYSAPRNGLAPLNQTAMTALL.

A signal peptide spans 1–25; it reads MGTGAGGPSVLALLFAVCAPLRLQA. Residues 26 to 250 lie on the Extracellular side of the membrane; it reads EELGDGCGHI…FTTPGMNITT (225 aa). 4 disulfides stabilise this stretch: Cys32–Cys59, Cys85–Cys103, Cys149–Cys165, and Cys169–Cys191. In terms of domain architecture, CUB spans 32-141; that stretch reads CGHIVTSQDS…RGFLLTYASS (110 aa). N-linked (GlcNAc...) asparagine glycosylation is present at Asn55. Residues 143 to 239 form the LCCL domain; sequence HPDLITCLER…RHGSLSEKRF (97 aa). N-linked (GlcNAc...) asparagine glycosylation occurs at Asn247. A helical transmembrane segment spans residues 251–271; it reads VAIPSVIFIALLLTGMGIFAI. Topologically, residues 272-503 are cytoplasmic; it reads CRKRKKKGNP…LNQTAMTALL (232 aa). Residue Ser305 is modified to Phosphoserine. The residue at position 406 (Thr406) is a Phosphothreonine. The disordered stretch occupies residues 410–503; sequence QSGYRVPGPR…LNQTAMTALL (94 aa). Positions 494 to 503 are enriched in polar residues; it reads LNQTAMTALL.

The protein localises to the membrane. The polypeptide is Discoidin, CUB and LCCL domain-containing protein 1 (Dcbld1) (Mus musculus (Mouse)).